Consider the following 1040-residue polypeptide: Multidrug resistance protein MdtB (1040 aa).

12 consecutive transmembrane segments (helical) span residues 16–36, 342–362, 369–389, 396–416, 440–460, 472–492, 537–557, 863–883, 888–908, 911–931, 968–988, and 998–1018; these read FIMR…AGII, DTQF…YLFL, IIPG…MVFL, LTLM…IVVI, IGFT…PLLF, FAVT…TLTP, WLTL…WVFI, LGST…VLGV, FIHP…ALLA, LAGS…IGIV, ILMT…STGV, and IGMV…TPVI.

This sequence belongs to the resistance-nodulation-cell division (RND) (TC 2.A.6) family. MdtB subfamily. In terms of assembly, part of a tripartite efflux system composed of MdtA, MdtB and MdtC. MdtB forms a heteromultimer with MdtC.

The protein resides in the cell inner membrane. The sequence is that of Multidrug resistance protein MdtB from Klebsiella pneumoniae (strain 342).